The sequence spans 131 residues: uncharacterized protein (131 aa).

4 helical membrane-spanning segments follow: residues 7-29 (LLKF…SLLY), 49-69 (LVKV…LIAL), 76-98 (LILI…LFTY), and 102-124 (ELSE…FLYL).

It localises to the cell membrane. This is an uncharacterized protein from Aquifex aeolicus (strain VF5).